Here is a 183-residue protein sequence, read N- to C-terminus: Peptidyl-tRNA hydrolase (183 aa).

Tyr14 serves as a coordination point for tRNA. His19 serves as the catalytic Proton acceptor. TRNA contacts are provided by Tyr60 and Asn62.

Belongs to the PTH family. In terms of assembly, monomer.

Its subcellular location is the cytoplasm. The enzyme catalyses an N-acyl-L-alpha-aminoacyl-tRNA + H2O = an N-acyl-L-amino acid + a tRNA + H(+). Functionally, hydrolyzes ribosome-free peptidyl-tRNAs (with 1 or more amino acids incorporated), which drop off the ribosome during protein synthesis, or as a result of ribosome stalling. In terms of biological role, catalyzes the release of premature peptidyl moieties from peptidyl-tRNA molecules trapped in stalled 50S ribosomal subunits, and thus maintains levels of free tRNAs and 50S ribosomes. This chain is Peptidyl-tRNA hydrolase, found in Mycoplasmoides gallisepticum (strain R(low / passage 15 / clone 2)) (Mycoplasma gallisepticum).